Reading from the N-terminus, the 1005-residue chain is DNA polymerase (1005 aa).

Belongs to the DNA polymerase type-B family. In terms of assembly, interacts with OPG148. Component of the Uracil-DNA glycosylase(UDG)-OPG148-polymerase complex; OPG148 and OPG116/UDG form a heterodimeric processivity factor that associates with OPG071 to form the processive polymerase holoenzyme.

It carries out the reaction DNA(n) + a 2'-deoxyribonucleoside 5'-triphosphate = DNA(n+1) + diphosphate. Its function is as follows. Catalyzes DNA synthesis. Acquires processivity by associating with a heterodimeric processivity factor comprised of the viral OPG148 and OPG116 proteins, thereby forming the DNA polymerase holoenzyme. Displays 3'- to 5' exonuclease activity. Might participate in viral DNA recombination. Does not perform OPG116/D4synthesis across an abasic site. The protein is DNA polymerase (OPG071) of Variola virus (isolate Human/India/Ind3/1967) (VARV).